A 383-amino-acid polypeptide reads, in one-letter code: Na(+)/H(+) antiporter NhaA (383 aa).

Transmembrane regions (helical) follow at residues 10–30 (LIGG…NNSP), 56–76 (LMHW…GLEI), 91–111 (IITP…IYLS), 121–141 (GWAI…ALLG), 150–170 (LLVI…IAIF), 174–194 (SLSL…IICN), 206–226 (VVLG…ATLA), 254–274 (PWII…ISFS), 275–295 (GISF…GLFV), 327–347 (GISL…VLAF), and 355–375 (AIKI…YIVL).

It belongs to the NhaA Na(+)/H(+) (TC 2.A.33) antiporter family.

It localises to the cell inner membrane. It catalyses the reaction Na(+)(in) + 2 H(+)(out) = Na(+)(out) + 2 H(+)(in). Functionally, na(+)/H(+) antiporter that extrudes sodium in exchange for external protons. The sequence is that of Na(+)/H(+) antiporter NhaA from Francisella tularensis subsp. novicida (strain U112).